We begin with the raw amino-acid sequence, 20 residues long: Mu-conotoxin SIIIB (20 aa).

Q1 is modified (pyrrolidone carboxylic acid). Intrachain disulfides connect C3–C13, C4–C19, and C8–C20. C20 is subject to Cysteine amide.

Expressed by the venom duct.

It localises to the secreted. In terms of biological role, mu-conotoxins block voltage-gated sodium channels (VGSC). Potently displaces (125)I-TIIIA from native rat brain Nav1.2/SCN2A (IC(50) is 5 nM) and muscle Nav1.4/SCN4A (IC(50) is 3 nM) VGSCs. Potently and irreversibly inhibits current through Xenopus oocyte-expressed Nav1.2/SCN2A and Nav1.4/SCN4A. The polypeptide is Mu-conotoxin SIIIB (Conus striatus (Striated cone)).